The chain runs to 227 residues: Endonuclease V (227 aa).

The Mg(2+) site is built by Asp-46 and Asp-114.

Belongs to the endonuclease V family. The cofactor is Mg(2+).

Its subcellular location is the cytoplasm. It carries out the reaction Endonucleolytic cleavage at apurinic or apyrimidinic sites to products with a 5'-phosphate.. In terms of biological role, DNA repair enzyme involved in the repair of deaminated bases. Selectively cleaves double-stranded DNA at the second phosphodiester bond 3' to a deoxyinosine leaving behind the intact lesion on the nicked DNA. The polypeptide is Endonuclease V (Alkalilimnicola ehrlichii (strain ATCC BAA-1101 / DSM 17681 / MLHE-1)).